The following is a 551-amino-acid chain: C6 finger transcription factor imqK (551 aa).

The zn(2)-C6 fungal-type DNA-binding region spans 11-53 (CDRCRGQKLRCVRLPGPAREDSPRSARSVNQPCERCKRAKVVC). Disordered regions lie at residues 280 to 302 (RQGMSAASDPNYPASGLGETSPS) and 351 to 378 (NEYSSSRSQSRNHSTSASSRSKDGRISA). The span at 351 to 369 (NEYSSSRSQSRNHSTSASS) shows a compositional bias: low complexity.

The protein resides in the nucleus. Its function is as follows. C6 finger transcription factor that positively regulates the cluster that mediates the biosynthesis of imizoquins A to D, tripeptide-derived alkaloids that serve a protective role against oxidative stress that are essential for normal germination. The protein is C6 finger transcription factor imqK of Aspergillus flavus (strain ATCC 200026 / FGSC A1120 / IAM 13836 / NRRL 3357 / JCM 12722 / SRRC 167).